A 527-amino-acid chain; its full sequence is MAVDSDYVTDRAAGSRQTVTGQQPEQDLNSPREECGVFGVWAPGEDVAKLTYYGLYALQHRGQEAAGIAVADGSQVLVFKDLGLVSQVFDEQTLAAMQGHVAIGHCRYSTTGDTTWENAQPVFRNTAAGTGVALGHNGNLVNAAALAARARDAGLIATRCPAPATTDSDILGALLAHGAADSTLEQAALDLLPTVRGAFCLTFMDENTLYACRDPYGVRPLSLGRLDRGWVVASETAALDIVGASFVRDIEPGELLAIDADGVRSTRFANPTPKGCVFEYVYLARPDSTIAGRSVHAARVEIGRRLARECPVEADLVIGVPESGTPAAVGYAQESGVPYGQGLMKNAYVGRTFIQPSQTIRQLGIRLKLNPLKEVIRGKRLIVVDDSIVRGNTQRALVRMLREAGAVELHVRIASPPVKWPCFYGIDFPSPAELIANAVENEDEMLEAVRHAIGADTLGYISLRGMVAASEQPTSRLCTACFDGKYPIELPRETALGKNVIEHMLANAARGAALGELAADDEVPVGR.

Positions 1–30 (MAVDSDYVTDRAAGSRQTVTGQQPEQDLNS) are disordered. Residues 1–34 (MAVDSDYVTDRAAGSRQTVTGQQPEQDLNSPREE) constitute a propeptide that is removed on maturation. The span at 15–29 (SRQTVTGQQPEQDLN) shows a compositional bias: polar residues. The active-site Nucleophile is the Cys-35. Residues 35-261 (CGVFGVWAPG…PGELLAIDAD (227 aa)) enclose the Glutamine amidotransferase type-2 domain. Cys-276 lines the [4Fe-4S] cluster pocket. Mg(2+) is bound by residues Ser-323, Asp-385, and Asp-386. The [4Fe-4S] cluster site is built by Cys-422, Cys-478, and Cys-481.

It in the C-terminal section; belongs to the purine/pyrimidine phosphoribosyltransferase family. Requires Mg(2+) as cofactor. [4Fe-4S] cluster is required as a cofactor.

The enzyme catalyses 5-phospho-beta-D-ribosylamine + L-glutamate + diphosphate = 5-phospho-alpha-D-ribose 1-diphosphate + L-glutamine + H2O. It functions in the pathway purine metabolism; IMP biosynthesis via de novo pathway; N(1)-(5-phospho-D-ribosyl)glycinamide from 5-phospho-alpha-D-ribose 1-diphosphate: step 1/2. In terms of biological role, catalyzes the formation of phosphoribosylamine from phosphoribosylpyrophosphate (PRPP) and glutamine. This chain is Amidophosphoribosyltransferase, found in Mycobacterium bovis (strain ATCC BAA-935 / AF2122/97).